The sequence spans 456 residues: Phosphomannomutase (456 aa).

Residue Ser98 is the Phosphoserine intermediate of the active site. Positions 98, 245, 247, and 249 each coordinate Mg(2+).

Belongs to the phosphohexose mutase family. Mg(2+) serves as cofactor.

It carries out the reaction alpha-D-mannose 1-phosphate = D-mannose 6-phosphate. The protein operates within nucleotide-sugar biosynthesis; GDP-alpha-D-mannose biosynthesis; alpha-D-mannose 1-phosphate from D-fructose 6-phosphate: step 2/2. It participates in bacterial outer membrane biogenesis; LPS O-antigen biosynthesis. In terms of biological role, involved in GDP-mannose biosynthesis which serves as the activated sugar nucleotide precursor for mannose residues in cell surface polysaccharides. This enzyme participates in synthesis of the LPS O antigen. The chain is Phosphomannomutase (manB) from Salmonella montevideo.